A 172-amino-acid chain; its full sequence is Centrin-2 (172 aa).

Residues 1–14 (MASNFKKTTMASSA) are compositionally biased toward polar residues. The tract at residues 1 to 31 (MASNFKKTTMASSAQRKRMSPKPELTEDQKQ) is disordered. Position 2 is an N-acetylalanine (A2). Residues 2–25 (ASNFKKTTMASSAQRKRMSPKPEL) form a required for self-assembly region. At S20 the chain carries Phosphoserine. Residue K22 forms a Glycyl lysine isopeptide (Lys-Gly) (interchain with G-Cter in SUMO2) linkage. Residue T26 is modified to Phosphothreonine. 4 consecutive EF-hand domains span residues 28 to 63 (DQKQ…LGFE), 64 to 99 (PKKE…KMSE), 101 to 136 (DTKE…LGEN), and 137 to 172 (LTDE…TSLY). Ca(2+)-binding residues include D41, D43, T45, T47, and E52. The Ca(2+) site is built by D150, D152, D154, E156, and E161.

It belongs to the centrin family. Monomer. Homooligomer. Interacts with CCP110, SFI1. Component of the XPC complex composed of XPC, RAD23B and CETN2. Component of the nuclear pore complex (NPC)-associated TREX-2 complex (transcription and export complex 2), composed of at least GANP, 2 copies of ENY2, PCID2, SEM1/DSS1, and either centrin CETN2 or centrin CETN3. The TREX-2 complex also associates with ALYREF/ALY and with the nucleoporin NUP153. Interacts with USP49. Forms a microtubule-associated complex with POC5, POC1B and FAM161A. Interacts with CCDC15. As to expression, ubiquitously expressed in all adult tissues tested, with strongest expression in brain, spleen, kidney, small intestine and ovary. Also expressed in the NIH 3T3 fibroblast cell line and peripheral blood lymphocytes.

Its subcellular location is the cytoplasm. It localises to the cytoskeleton. The protein localises to the microtubule organizing center. It is found in the centrosome. The protein resides in the centriole. Its subcellular location is the nucleus. It localises to the nucleus envelope. The protein localises to the nuclear pore complex. In terms of biological role, plays a fundamental role in microtubule organizing center structure and function. Required for centriole duplication and correct spindle formation. Has a role in regulating cytokinesis and genome stability via cooperation with CALM1 and CCP110. Functionally, involved in global genome nucleotide excision repair (GG-NER) by acting as component of the XPC complex. Cooperatively with Rad23b appears to stabilize Xpc. In vitro, stimulates DNA binding of the Xpc:Rad23b dimer. Its function is as follows. The XPC complex is proposed to represent the first factor bound at the sites of DNA damage and together with other core recognition factors, Xpa, RPA and the TFIIH complex, is part of the pre-incision (or initial recognition) complex. The XPC complex recognizes a wide spectrum of damaged DNA characterized by distortions of the DNA helix such as single-stranded loops, mismatched bubbles or single-stranded overhangs. The orientation of XPC complex binding appears to be crucial for inducing a productive NER. XPC complex is proposed to recognize and to interact with unpaired bases on the undamaged DNA strand which is followed by recruitment of the TFIIH complex and subsequent scanning for lesions in the opposite strand in a 5'-to-3' direction by the NER machinery. Cyclobutane pyrimidine dimers (CPDs) which are formed upon UV-induced DNA damage esacpe detection by the XPC complex due to a low degree of structural perurbation. Instead they are detected by the UV-DDB complex which in turn recruits and cooperates with the XPC complex in the respective DNA repair. As a component of the TREX-2 complex, involved in the export of mRNAs to the cytoplasm through the nuclear pores. In Mus musculus (Mouse), this protein is Centrin-2 (Cetn2).